Here is a 358-residue protein sequence, read N- to C-terminus: Septin-12 (358 aa).

The disordered stretch occupies residues 1-25 (MDPLRRSPSPCLSSQPSSPSTPPCE). Positions 6-18 (RSPSPCLSSQPSS) are enriched in low complexity. Residues 46-317 (MGFEFNIMVV…ENYRVIRLNE (272 aa)) enclose the Septin-type G domain. The interval 46 to 319 (MGFEFNIMVV…YRVIRLNESH (274 aa)) is interaction with SEPTIN7. The interval 56–63 (GQSGLGKS) is G1 motif. GTP contacts are provided by residues 56–63 (GQSGLGKS), T89, G115, 195–203 (RADSLTMEE), G251, and R266. The segment at 112-115 (DTPG) is G3 motif. A G4 motif region spans residues 194–197 (ARAD). The tract at residues 258-358 (VNGRCVLGRK…GAHDDSDDEF (101 aa)) is self-association (via N-terminus) to polymerize octameric septin 12-7-6-2/4-2/4-6-7-12 filaments.

The protein belongs to the TRAFAC class TrmE-Era-EngA-EngB-Septin-like GTPase superfamily. Septin GTPase family. In terms of assembly, septins polymerize into heterooligomeric protein complexes that form filaments, and can associate with cellular membranes, actin filaments and microtubules. GTPase activity is required for filament formation. Interacts with SEPTIN6 and SEPTIN11. Self-associates. Component of a septin core octameric complex consisting of SEPTIN12, SEPTIN7, SEPTIN6 and SEPTIN2 or SEPTIN4 in the order 12-7-6-2-2-6-7-12 or 12-7-6-4-4-6-7-12 and located in the sperm annulus; the octamer polymerizes into filaments via the SEPTIN12 N- and C-termini; the SEPTIN12:SEPTIN7 association is mediated by the respective GTP-binding domains. Interacts with SPAG4 and LMNB1. Associates with alpha- and beta-tubulins. In terms of tissue distribution, widely expressed. Expressed in lymph node.

It localises to the cytoplasm. Its subcellular location is the cytoskeleton. The protein localises to the spindle. It is found in the nucleus. The protein resides in the cell projection. It localises to the cilium. Its subcellular location is the flagellum. Its function is as follows. Filament-forming cytoskeletal GTPase. Involved in spermatogenesis. Involved in the morphogenesis of sperm heads and the elongation of sperm tails probably implicating the association with alpha- and beta-tubulins. Forms a filamentous structure with SEPTIN7, SEPTIN6, SEPTIN2 and probably SEPTIN4 at the sperm annulus which is required for the structural integrity and motility of the sperm tail during postmeiotic differentiation. May play a role in cytokinesis (Potential). This is Septin-12 from Homo sapiens (Human).